The sequence spans 500 residues: Cytochrome P450 2D20 (500 aa).

Residue C446 participates in heme binding.

This sequence belongs to the cytochrome P450 family. The cofactor is heme.

It is found in the endoplasmic reticulum membrane. The protein localises to the microsome membrane. The protein is Cytochrome P450 2D20 (CYP2D20) of Mesocricetus auratus (Golden hamster).